The chain runs to 121 residues: MSKLVPCLLLLGCLGLLFALPVPDSRKEPLPFSAPEDVRSAWDELERASLLQMLPETPGAEAGEDLREADAGMDIFYPRGEMRKAFSGQDPNIFLSHLLARIKKPYKKRGPPSECFWKYCV.

A signal peptide spans 1–19 (MSKLVPCLLLLGCLGLLFA). The propeptide occupies 20–106 (LPVPDSRKEP…HLLARIKKPY (87 aa)). Residues Cys-115 and Cys-120 are joined by a disulfide bond.

This sequence belongs to the urotensin-2 family.

It is found in the secreted. In terms of biological role, highly potent vasoconstrictor. The polypeptide is Urotensin-2 (UTS2) (Sus scrofa (Pig)).